Consider the following 191-residue polypeptide: Protein RER1A (191 aa).

N-acetylmethionine is present on Met-1. Transmembrane regions (helical) follow at residues 39 to 57 (YRWI…RVYY), 60 to 80 (GFYI…IGFL), 115 to 135 (FKFW…TFFS), and 136 to 156 (VFDV…LFVL).

It belongs to the RER1 family.

It is found in the membrane. Involved in the retrieval of endoplasmic reticulum membrane proteins from the early Golgi compartment. This chain is Protein RER1A (RER1A), found in Arabidopsis thaliana (Mouse-ear cress).